A 383-amino-acid chain; its full sequence is Serine protease 23 (383 aa).

The N-terminal stretch at 1–23 is a signal peptide; sequence MAGIPGLLILLLVLLCVFMQVSP. N-linked (GlcNAc...) asparagine glycosylation is present at asparagine 93. Cysteine 160 and cysteine 176 are joined by a disulfide. Histidine 175 (charge relay system) is an active-site residue. An N-linked (GlcNAc...) asparagine glycan is attached at asparagine 207. Residues aspartate 240 and serine 316 each act as charge relay system in the active site.

Belongs to the peptidase S1 family.

It localises to the secreted. The polypeptide is Serine protease 23 (Prss23) (Rattus norvegicus (Rat)).